The primary structure comprises 466 residues: Ribulose bisphosphate carboxylase large chain (466 aa).

Residue lysine 5 is modified to N6,N6,N6-trimethyllysine. Asparagine 114 and threonine 164 together coordinate substrate. Residue lysine 166 is the Proton acceptor of the active site. Lysine 168 contacts substrate. 3 residues coordinate Mg(2+): lysine 192, aspartate 194, and glutamate 195. Lysine 192 carries the post-translational modification N6-carboxylysine. Histidine 285 (proton acceptor) is an active-site residue. The substrate site is built by arginine 286, histidine 318, and serine 370.

It belongs to the RuBisCO large chain family. Type I subfamily. In terms of assembly, heterohexadecamer of 8 large chains and 8 small chains; disulfide-linked. The disulfide link is formed within the large subunit homodimers. Mg(2+) is required as a cofactor. In terms of processing, the disulfide bond which can form in the large chain dimeric partners within the hexadecamer appears to be associated with oxidative stress and protein turnover.

The protein localises to the plastid. The protein resides in the chloroplast. It carries out the reaction 2 (2R)-3-phosphoglycerate + 2 H(+) = D-ribulose 1,5-bisphosphate + CO2 + H2O. The enzyme catalyses D-ribulose 1,5-bisphosphate + O2 = 2-phosphoglycolate + (2R)-3-phosphoglycerate + 2 H(+). Functionally, ruBisCO catalyzes two reactions: the carboxylation of D-ribulose 1,5-bisphosphate, the primary event in carbon dioxide fixation, as well as the oxidative fragmentation of the pentose substrate in the photorespiration process. Both reactions occur simultaneously and in competition at the same active site. The polypeptide is Ribulose bisphosphate carboxylase large chain (Drosera capensis (Cape sundew)).